The chain runs to 245 residues: MPRYKLTIEYDGAPFCGWQLQPTLPSVQGALEAAALATCGEAVRVHGAGRTDAGVHALGQVAHVDIPKPFRADKLRDALNAHVRPHPIAVLSAELVADDFEARFSAIRRHYRYRIVNRRSNLALELGKVWRVPKPLDTDAMHRAAQVLIGKHDFTTFRDTECQAASPAKTLDVLDVVRNGDAVDIITNARSYLHSQVRSMVGSLVWVGEGRWTADDLAAALAARRRSACGPVAPPDGLYLVQVDY.

The active-site Nucleophile is the D52. Y111 is a binding site for substrate.

Belongs to the tRNA pseudouridine synthase TruA family. In terms of assembly, homodimer.

The catalysed reaction is uridine(38/39/40) in tRNA = pseudouridine(38/39/40) in tRNA. Functionally, formation of pseudouridine at positions 38, 39 and 40 in the anticodon stem and loop of transfer RNAs. The polypeptide is tRNA pseudouridine synthase A (Rhodopseudomonas palustris (strain HaA2)).